The chain runs to 267 residues: Hydroxyethylthiazole kinase 2 (267 aa).

Met41 lines the substrate pocket. Positions 116 and 166 each coordinate ATP. A substrate-binding site is contributed by Gly193.

This sequence belongs to the Thz kinase family. Mg(2+) serves as cofactor.

The catalysed reaction is 5-(2-hydroxyethyl)-4-methylthiazole + ATP = 4-methyl-5-(2-phosphooxyethyl)-thiazole + ADP + H(+). The protein operates within cofactor biosynthesis; thiamine diphosphate biosynthesis; 4-methyl-5-(2-phosphoethyl)-thiazole from 5-(2-hydroxyethyl)-4-methylthiazole: step 1/1. Its function is as follows. Catalyzes the phosphorylation of the hydroxyl group of 4-methyl-5-beta-hydroxyethylthiazole (THZ). The sequence is that of Hydroxyethylthiazole kinase 2 from Streptococcus pneumoniae (strain Taiwan19F-14).